The primary structure comprises 261 residues: Phosphatidylglycerol--prolipoprotein diacylglyceryl transferase (261 aa).

Transmembrane regions (helical) follow at residues 20-40, 54-74, and 94-114; these read LAIH…VWLA, IIDF…LYYV, and GGGA…VFSY. Arg139 is a binding site for a 1,2-diacyl-sn-glycero-3-phospho-(1'-sn-glycerol). The next 3 membrane-spanning stretches (helical) occupy residues 175-195, 205-225, and 235-255; these read MPTF…VMVF, GDIF…VEGM, and ARVS…LFIY.

Belongs to the Lgt family.

The protein localises to the cell membrane. It catalyses the reaction L-cysteinyl-[prolipoprotein] + a 1,2-diacyl-sn-glycero-3-phospho-(1'-sn-glycerol) = an S-1,2-diacyl-sn-glyceryl-L-cysteinyl-[prolipoprotein] + sn-glycerol 1-phosphate + H(+). Its pathway is protein modification; lipoprotein biosynthesis (diacylglyceryl transfer). In terms of biological role, catalyzes the transfer of the diacylglyceryl group from phosphatidylglycerol to the sulfhydryl group of the N-terminal cysteine of a prolipoprotein, the first step in the formation of mature lipoproteins. This Lactococcus lactis subsp. lactis (strain IL1403) (Streptococcus lactis) protein is Phosphatidylglycerol--prolipoprotein diacylglyceryl transferase.